Reading from the N-terminus, the 195-residue chain is Imidazoleglycerol-phosphate dehydratase (195 aa).

This sequence belongs to the imidazoleglycerol-phosphate dehydratase family.

It localises to the cytoplasm. It catalyses the reaction D-erythro-1-(imidazol-4-yl)glycerol 3-phosphate = 3-(imidazol-4-yl)-2-oxopropyl phosphate + H2O. It functions in the pathway amino-acid biosynthesis; L-histidine biosynthesis; L-histidine from 5-phospho-alpha-D-ribose 1-diphosphate: step 6/9. The polypeptide is Imidazoleglycerol-phosphate dehydratase (Polynucleobacter necessarius subsp. necessarius (strain STIR1)).